A 100-amino-acid polypeptide reads, in one-letter code: ADAPPPAFNQCKACHSIDAGKNGVGPSLSGAYGRKVGLAPNYKYSPAHLASGMTIDDAMLTKYLANPKETIPGNKMGAAFGGLKNPADVAAVIAYLKTVK.

Heme c is bound by residues Cys-11, Cys-14, His-15, and Met-76.

Belongs to the cytochrome c family. In terms of processing, binds 1 heme c group covalently per subunit.

Cytochrome c2 is found mainly in purple, non-sulfur, photosynthetic bacteria where it functions as the electron donor to the oxidized bacteriochlorophyll in the photophosphorylation pathway. However, it may also have a role in the respiratory chain and is found in some non-photosynthetic bacteria. In Magnetospirillum molischianum (Rhodospirillum molischianum), this protein is Cytochrome c2 iso-1.